We begin with the raw amino-acid sequence, 332 residues long: Ubiquinone biosynthesis protein COQ4, mitochondrial (332 aa).

The transit peptide at methionine 1 to phenylalanine 16 directs the protein to the mitochondrion. Residues histidine 212, aspartate 213, histidine 216, and glutamate 228 each coordinate Zn(2+).

It belongs to the COQ4 family. As to quaternary structure, component of a multi-subunit COQ enzyme complex, composed of at least COQ3, COQ4, COQ5, COQ6, COQ7 and COQ9. Zn(2+) serves as cofactor.

Its subcellular location is the mitochondrion inner membrane. The catalysed reaction is a 4-hydroxy-3-methoxy-5-(all-trans-polyprenyl)benzoate + H(+) = a 2-methoxy-6-(all-trans-polyprenyl)phenol + CO2. It functions in the pathway cofactor biosynthesis; ubiquinone biosynthesis. In terms of biological role, lyase that catalyzes the C1-decarboxylation of 4-hydroxy-3-methoxy-5-(all-trans-polyprenyl)benzoic acid into 2-methoxy-6-(all-trans-polyprenyl)phenol during ubiquinone biosynthesis. In Kluyveromyces lactis (strain ATCC 8585 / CBS 2359 / DSM 70799 / NBRC 1267 / NRRL Y-1140 / WM37) (Yeast), this protein is Ubiquinone biosynthesis protein COQ4, mitochondrial.